A 242-amino-acid chain; its full sequence is Probable pectate lyase D (242 aa).

A signal peptide spans 1-17 (MYQKSLLFSLLASSALA). N-linked (GlcNAc...) asparagine glycosylation is present at Asn-216. A disordered region spans residues 217–242 (DTGAEPEEISEGPSDACQYSEPLSSC).

The protein belongs to the polysaccharide lyase 3 family. Requires Ca(2+) as cofactor.

The protein resides in the secreted. It catalyses the reaction Eliminative cleavage of (1-&gt;4)-alpha-D-galacturonan to give oligosaccharides with 4-deoxy-alpha-D-galact-4-enuronosyl groups at their non-reducing ends.. In terms of biological role, pectinolytic enzyme consist of four classes of enzymes: pectin lyase, polygalacturonase, pectin methylesterase and rhamnogalacturonase. Among pectinolytic enzymes, pectin lyase is the most important in depolymerization of pectin, since it cleaves internal glycosidic bonds of highly methylated pectins. Favors pectate, the anion, over pectin, the methyl ester. This chain is Probable pectate lyase D (plyD), found in Aspergillus fumigatus (strain CBS 144.89 / FGSC A1163 / CEA10) (Neosartorya fumigata).